Reading from the N-terminus, the 284-residue chain is uncharacterized protein (284 aa).

The tract at residues 236-284 (IDITNEADSSEIIDSEPSNKDETEKPSAQETDPFDGKPVDIKDDELPFD) is disordered. 2 stretches are compositionally biased toward basic and acidic residues: residues 252 to 262 (PSNKDETEKPS) and 269 to 284 (FDGKPVDIKDDELPFD).

This is an uncharacterized protein from Bacillus subtilis (strain 168).